Consider the following 410-residue polypeptide: Arginine deiminase (410 aa).

The active-site Amidino-cysteine intermediate is cysteine 400.

This sequence belongs to the arginine deiminase family.

The protein resides in the cytoplasm. It carries out the reaction L-arginine + H2O = L-citrulline + NH4(+). It functions in the pathway amino-acid degradation; L-arginine degradation via ADI pathway; carbamoyl phosphate from L-arginine: step 1/2. The polypeptide is Arginine deiminase (Bacillus cereus (strain ATCC 10987 / NRS 248)).